We begin with the raw amino-acid sequence, 644 residues long: Sentrin-specific protease 1 (644 aa).

The interval 1-200 is interaction with CCAR2; sequence MDDIADRMRM…REIYRQLLQM (200 aa). Phosphoserine occurs at positions 57, 117, 132, and 157. The interval 92 to 117 is disordered; the sequence is QSANGQWRNSTPSSSSSLQKSRNSRS. Positions 99–117 are enriched in low complexity; sequence RNSTPSSSSSLQKSRNSRS. Disordered stretches follow at residues 156–184 and 283–312; these read PSPSWSGSCRRSLLSPKKTQRRHVSTAEE and SKDSGTLHHPHHHHSVPHQPDNLAASNTQS. The Nuclear localization signal signature appears at 171–177; the sequence is PKKTQRR. Residues 450 to 613 are protease; the sequence is LTITRKDIQT…GMFACKYADC (164 aa). Active-site residues include H533 and D550. The short motif at 574-577 is the Nuclear localization signal element; that stretch reads KKRK. C603 acts as the Nucleophile in catalysis. A Nuclear localization signal motif is present at residues 628-634; the sequence is PYFRKRM. Residues 635–644 carry the Nuclear export signal motif; that stretch reads VWEILHRKLL.

Belongs to the peptidase C48 family. In terms of assembly, interacts with RBM33; promoting ALKBH5 desumoylation and subsequent activation. As to expression, highly expressed in testis. Expressed at lower levels in thymus, pancreas, spleen, liver, ovary and small intestine.

The protein localises to the nucleus. Its subcellular location is the cytoplasm. Protease that catalyzes two essential functions in the SUMO pathway. The first is the hydrolysis of an alpha-linked peptide bond at the C-terminal end of the small ubiquitin-like modifier (SUMO) propeptides, SUMO1, SUMO2 and SUMO3 leading to the mature form of the proteins. The second is the deconjugation of SUMO1, SUMO2 and SUMO3 from targeted proteins, by cleaving an epsilon-linked peptide bond between the C-terminal glycine of the mature SUMO and the lysine epsilon-amino group of the target protein. Deconjugates SUMO1 from HIPK2. Deconjugates SUMO1 from HDAC1 and BHLHE40/DEC1, which decreases its transcriptional repression activity. Deconjugates SUMO1 from CLOCK, which decreases its transcriptional activation activity. Deconjugates SUMO2 from MTA1. Inhibits N(6)-methyladenosine (m6A) RNA methylation by mediating SUMO1 deconjugation from METTL3 and ALKBH5: METTL3 inhibits the m6A RNA methyltransferase activity, while ALKBH5 desumoylation promotes m6A demethylation. Desumoylates CCAR2 which decreases its interaction with SIRT1. Deconjugates SUMO1 from GPS2. The chain is Sentrin-specific protease 1 (SENP1) from Homo sapiens (Human).